The chain runs to 742 residues: Phosphoribosylformylglycinamidine synthase subunit PurL (742 aa).

Residue His-54 is part of the active site. ATP-binding residues include Tyr-57 and Lys-96. Glu-98 lines the Mg(2+) pocket. Substrate-binding positions include 99 to 102 and Arg-121; that span reads SHNH. His-100 serves as the catalytic Proton acceptor. Asp-122 serves as a coordination point for Mg(2+). Gln-245 lines the substrate pocket. Position 273 (Asp-273) interacts with Mg(2+). 317–319 is a substrate binding site; it reads ESQ. ATP contacts are provided by Asp-500 and Gly-537. Position 538 (Asn-538) interacts with Mg(2+). Residue Ser-540 coordinates substrate.

The protein belongs to the FGAMS family. As to quaternary structure, monomer. Part of the FGAM synthase complex composed of 1 PurL, 1 PurQ and 2 PurS subunits.

It is found in the cytoplasm. The catalysed reaction is N(2)-formyl-N(1)-(5-phospho-beta-D-ribosyl)glycinamide + L-glutamine + ATP + H2O = 2-formamido-N(1)-(5-O-phospho-beta-D-ribosyl)acetamidine + L-glutamate + ADP + phosphate + H(+). Its pathway is purine metabolism; IMP biosynthesis via de novo pathway; 5-amino-1-(5-phospho-D-ribosyl)imidazole from N(2)-formyl-N(1)-(5-phospho-D-ribosyl)glycinamide: step 1/2. Its function is as follows. Part of the phosphoribosylformylglycinamidine synthase complex involved in the purines biosynthetic pathway. Catalyzes the ATP-dependent conversion of formylglycinamide ribonucleotide (FGAR) and glutamine to yield formylglycinamidine ribonucleotide (FGAM) and glutamate. The FGAM synthase complex is composed of three subunits. PurQ produces an ammonia molecule by converting glutamine to glutamate. PurL transfers the ammonia molecule to FGAR to form FGAM in an ATP-dependent manner. PurS interacts with PurQ and PurL and is thought to assist in the transfer of the ammonia molecule from PurQ to PurL. The chain is Phosphoribosylformylglycinamidine synthase subunit PurL from Geobacillus sp. (strain WCH70).